A 327-amino-acid chain; its full sequence is Phenylalanine--tRNA ligase alpha subunit (327 aa).

Residue E252 participates in Mg(2+) binding.

The protein belongs to the class-II aminoacyl-tRNA synthetase family. Phe-tRNA synthetase alpha subunit type 1 subfamily. In terms of assembly, tetramer of two alpha and two beta subunits. It depends on Mg(2+) as a cofactor.

The protein resides in the cytoplasm. It catalyses the reaction tRNA(Phe) + L-phenylalanine + ATP = L-phenylalanyl-tRNA(Phe) + AMP + diphosphate + H(+). The sequence is that of Phenylalanine--tRNA ligase alpha subunit from Salmonella agona (strain SL483).